Consider the following 815-residue polypeptide: uncharacterized protein (815 aa).

Disordered regions lie at residues 123–183 (QSNT…QPST), 249–274 (NVNNNKNNKNQNNNNNNNIENSNNTN), 592–668 (IKQN…NLNS), and 765–815 (NNEE…EEIK). Polar residues-rich tracts occupy residues 135 to 154 (SIITNSDSPRLIVSDTTSTT) and 174 to 183 (DSITVLQPST). The segment covering 595-611 (NGSSSSNNNSKLSSTNS) has biased composition (low complexity). Over residues 612 to 639 (GQTSDNPINSSNGGQSIKKQGSNLSLNR) the composition is skewed to polar residues. Positions 640-668 (QQSSTKLNNQSNNNNNNNANTTNQNNLNS) are enriched in low complexity. Residues 765–782 (NNEEHNNNNKENNNENNK) are compositionally biased toward basic and acidic residues. A compositionally biased stretch (low complexity) spans 783-809 (ENINNNNNIINNNNDNNCNENNNNCNE).

This is an uncharacterized protein from Dictyostelium discoideum (Social amoeba).